The chain runs to 507 residues: Glycerol kinase (507 aa).

Position 12 (Thr12) interacts with ADP. Positions 12, 13, and 14 each coordinate ATP. Residue Thr12 participates in sn-glycerol 3-phosphate binding. Arg16 serves as a coordination point for ADP. Residues Arg82, Glu83, Tyr134, and Asp250 each coordinate sn-glycerol 3-phosphate. 5 residues coordinate glycerol: Arg82, Glu83, Tyr134, Asp250, and Gln251. Residues Thr272 and Gly316 each contribute to the ADP site. The ATP site is built by Thr272, Gly316, Gln320, and Gly417. Positions 417 and 421 each coordinate ADP.

Belongs to the FGGY kinase family.

It catalyses the reaction glycerol + ATP = sn-glycerol 3-phosphate + ADP + H(+). It functions in the pathway polyol metabolism; glycerol degradation via glycerol kinase pathway; sn-glycerol 3-phosphate from glycerol: step 1/1. Inhibited by fructose 1,6-bisphosphate (FBP). Key enzyme in the regulation of glycerol uptake and metabolism. Catalyzes the phosphorylation of glycerol to yield sn-glycerol 3-phosphate. This Beijerinckia indica subsp. indica (strain ATCC 9039 / DSM 1715 / NCIMB 8712) protein is Glycerol kinase.